Consider the following 207-residue polypeptide: Guanylate kinase (207 aa).

The Guanylate kinase-like domain occupies 4-184; it reads GTLYIVSAPS…AQMDFRSIIR (181 aa). 11-18 contacts ATP; the sequence is APSGAGKS.

It belongs to the guanylate kinase family.

The protein resides in the cytoplasm. The enzyme catalyses GMP + ATP = GDP + ADP. In terms of biological role, essential for recycling GMP and indirectly, cGMP. The sequence is that of Guanylate kinase from Aliivibrio fischeri (strain ATCC 700601 / ES114) (Vibrio fischeri).